The following is a 233-amino-acid chain: Lipoprotein-releasing system ATP-binding protein LolD (233 aa).

Residues 6 to 233 (LQCDNLCKRY…TAELSLMGAE (228 aa)) form the ABC transporter domain. 42–49 (GSSGSGKS) provides a ligand contact to ATP.

This sequence belongs to the ABC transporter superfamily. Lipoprotein translocase (TC 3.A.1.125) family. In terms of assembly, the complex is composed of two ATP-binding proteins (LolD) and two transmembrane proteins (LolC and LolE).

It localises to the cell inner membrane. Functionally, part of the ABC transporter complex LolCDE involved in the translocation of mature outer membrane-directed lipoproteins, from the inner membrane to the periplasmic chaperone, LolA. Responsible for the formation of the LolA-lipoprotein complex in an ATP-dependent manner. The polypeptide is Lipoprotein-releasing system ATP-binding protein LolD (Escherichia coli O6:K15:H31 (strain 536 / UPEC)).